Reading from the N-terminus, the 304-residue chain is UDP-N-acetylenolpyruvoylglucosamine reductase (304 aa).

The FAD-binding PCMH-type domain occupies 33 to 198; that stretch reads KVGGPVDILL…LRATFNLVNG (166 aa). Arginine 177 is an active-site residue. Serine 227 functions as the Proton donor in the catalytic mechanism. Glutamate 297 is an active-site residue.

The protein belongs to the MurB family. Requires FAD as cofactor.

The protein localises to the cytoplasm. The enzyme catalyses UDP-N-acetyl-alpha-D-muramate + NADP(+) = UDP-N-acetyl-3-O-(1-carboxyvinyl)-alpha-D-glucosamine + NADPH + H(+). Its pathway is cell wall biogenesis; peptidoglycan biosynthesis. Cell wall formation. This Clostridium beijerinckii (strain ATCC 51743 / NCIMB 8052) (Clostridium acetobutylicum) protein is UDP-N-acetylenolpyruvoylglucosamine reductase.